The chain runs to 275 residues: Autophagy protein 5 (275 aa).

Methionine 1 bears the N-acetylmethionine mark. Lysine 130 is covalently cross-linked (Glycyl lysine isopeptide (Lys-Gly) (interchain with G-Cter in ATG12)).

This sequence belongs to the ATG5 family. In terms of assembly, forms a conjugate with ATG12. Part of the minor complex composed of 4 sets of ATG12-ATG5 and ATG16L1 (400 kDa); this complex interacts with ATG3 leading to disruption of ATG7 interaction and promotion of ATG8-like proteins lipidation. Forms an 800-kDa complex composed of ATG12-ATG5 and ATG16L2. The ATG12-ATG5 conjugate interacts with RAB33A; this interaction is bridged by ATG16L1 and promotes ATG12-ATG5-ATG16L1 complex recruitment to phagophores. Interacts with TECPR1; the interaction is direct and does not take place when ATG16L1 is associated with the ATG5-ATG12 conjugate. Interacts with DHX58/RIG-1, IFIH1/MDA5 and MAVS/IPS-1 in monomeric form as well as in ATG12-ATG5 conjugate form. The interaction with MAVS is further enhanced upon vesicular stomatitis virus (VSV) infection. Interacts with ATG3. Interacts with ATG7 and ATG10. Interacts with FADD. Interacts with Bassoon/BSN; this interaction is important for the regulation of presynaptic autophagy. Interacts with ATG16L2. Conjugated to ATG12; which is essential for autophagy, but is not required for association with isolation membrane. Post-translationally, acetylated by EP300.

It is found in the cytoplasm. The protein localises to the preautophagosomal structure membrane. Functionally, involved in autophagic vesicle formation. Conjugation with ATG12, through a ubiquitin-like conjugating system involving ATG7 as an E1-like activating enzyme and ATG10 as an E2-like conjugating enzyme, is essential for its function. The ATG12-ATG5 conjugate acts as an E3-like enzyme which is required for lipidation of ATG8 family proteins and their association to the vesicle membranes. Involved in mitochondrial quality control after oxidative damage, and in subsequent cellular longevity. Plays a critical role in multiple aspects of lymphocyte development and is essential for both B and T lymphocyte survival and proliferation. Required for optimal processing and presentation of antigens for MHC II. Involved in the maintenance of axon morphology and membrane structures, as well as in normal adipocyte differentiation. Promotes primary ciliogenesis through removal of OFD1 from centriolar satellites and degradation of IFT20 via the autophagic pathway. As part of the ATG8 conjugation system with ATG12 and ATG16L1, required for recruitment of LRRK2 to stressed lysosomes and induction of LRRK2 kinase activity in response to lysosomal stress. May play an important role in the apoptotic process, possibly within the modified cytoskeleton. Its expression is a relatively late event in the apoptotic process, occurring downstream of caspase activity. Plays a crucial role in IFN-gamma-induced autophagic cell death by interacting with FADD. The chain is Autophagy protein 5 from Pongo abelii (Sumatran orangutan).